The sequence spans 359 residues: Probable dual-specificity RNA methyltransferase RlmN (359 aa).

Glu-99 serves as the catalytic Proton acceptor. Residues 105-342 (TENRRTACVS…VTIRKSYGTT (238 aa)) enclose the Radical SAM core domain. Cys-112 and Cys-347 form a disulfide bridge. [4Fe-4S] cluster contacts are provided by Cys-119, Cys-123, and Cys-126. S-adenosyl-L-methionine-binding positions include 171–172 (GE), Ser-204, 227–229 (SLH), and Asn-304. Catalysis depends on Cys-347, which acts as the S-methylcysteine intermediate.

The protein belongs to the radical SAM superfamily. RlmN family. [4Fe-4S] cluster serves as cofactor.

Its subcellular location is the cytoplasm. It carries out the reaction adenosine(2503) in 23S rRNA + 2 reduced [2Fe-2S]-[ferredoxin] + 2 S-adenosyl-L-methionine = 2-methyladenosine(2503) in 23S rRNA + 5'-deoxyadenosine + L-methionine + 2 oxidized [2Fe-2S]-[ferredoxin] + S-adenosyl-L-homocysteine. The enzyme catalyses adenosine(37) in tRNA + 2 reduced [2Fe-2S]-[ferredoxin] + 2 S-adenosyl-L-methionine = 2-methyladenosine(37) in tRNA + 5'-deoxyadenosine + L-methionine + 2 oxidized [2Fe-2S]-[ferredoxin] + S-adenosyl-L-homocysteine. Specifically methylates position 2 of adenine 2503 in 23S rRNA and position 2 of adenine 37 in tRNAs. This Pelodictyon phaeoclathratiforme (strain DSM 5477 / BU-1) protein is Probable dual-specificity RNA methyltransferase RlmN.